The chain runs to 288 residues: Small ribosomal subunit biogenesis GTPase RsgA (288 aa).

Residues 61–218 (TNKLIRPPVS…IVDTPGFSSL (158 aa)) enclose the CP-type G domain. Residues 110–113 (NKID) and 161–169 (GPSGVGKST) contribute to the GTP site. Zn(2+) contacts are provided by Cys242, Cys247, His249, and Cys255.

It belongs to the TRAFAC class YlqF/YawG GTPase family. RsgA subfamily. In terms of assembly, monomer. Associates with 30S ribosomal subunit, binds 16S rRNA. It depends on Zn(2+) as a cofactor.

Its subcellular location is the cytoplasm. Functionally, one of several proteins that assist in the late maturation steps of the functional core of the 30S ribosomal subunit. Helps release RbfA from mature subunits. May play a role in the assembly of ribosomal proteins into the subunit. Circularly permuted GTPase that catalyzes slow GTP hydrolysis, GTPase activity is stimulated by the 30S ribosomal subunit. The protein is Small ribosomal subunit biogenesis GTPase RsgA of Clostridium acetobutylicum (strain ATCC 824 / DSM 792 / JCM 1419 / IAM 19013 / LMG 5710 / NBRC 13948 / NRRL B-527 / VKM B-1787 / 2291 / W).